Reading from the N-terminus, the 353-residue chain is Rhodopsin (353 aa).

Over 1–36 (MNGTEGPYFYVPMVNTSGIVRSPYEYPQYYLVNPAA) the chain is Extracellular. 2 N-linked (GlcNAc...) asparagine glycosylation sites follow: asparagine 2 and asparagine 15. The chain crosses the membrane as a helical span at residues 37–61 (YAALGAYMFLLILVGFPINFLTLYV). Over 62–73 (TIEHKKLRTPLN) the chain is Cytoplasmic. Residues 74-96 (YILLNLAVADLFMVFGGFTTTMY) traverse the membrane as a helical segment. At 97-110 (TSMHGYFVLGRLGC) the chain is on the extracellular side. Cysteine 110 and cysteine 187 are disulfide-bonded. The chain crosses the membrane as a helical span at residues 111-133 (NIEGFFATLGGEIALWSLVVLAI). Residues 134-136 (ERW) carry the 'Ionic lock' involved in activated form stabilization motif. Over 134-152 (ERWVVVCKPISNFRFGENH) the chain is Cytoplasmic. The chain crosses the membrane as a helical span at residues 153-173 (AIMGLAFTWLMAMACAAPPLV). The Extracellular segment spans residues 174–202 (GWSRYIPEGMQCSCGIDYYTRAEGFNNES). Residue asparagine 200 is glycosylated (N-linked (GlcNAc...) asparagine). Residues 203 to 224 (FVIYMFVCHFLIPLMVVFFCYG) form a helical membrane-spanning segment. Topologically, residues 225 to 252 (RLLCAVKEAAAAQQESETTQRAEREVTR) are cytoplasmic. Residues 253–274 (MVVIMVIAFLICWCPYAGVAWW) traverse the membrane as a helical segment. Topologically, residues 275–286 (IFTHQGSDFGPV) are extracellular. The chain crosses the membrane as a helical span at residues 287-308 (FMTIPAFFAKSSSIYNPMIYIC). Lysine 296 is subject to N6-(retinylidene)lysine. Residues 309–353 (LNKQFRHCMITTLCCGKNPFEEEEGASTASKTEASSVSSSSVSPA) are Cytoplasmic-facing. 2 S-palmitoyl cysteine lipidation sites follow: cysteine 322 and cysteine 323. The disordered stretch occupies residues 331–353 (EEGASTASKTEASSVSSSSVSPA). Low complexity predominate over residues 334–353 (ASTASKTEASSVSSSSVSPA).

The protein belongs to the G-protein coupled receptor 1 family. Opsin subfamily. Phosphorylated on some or all of the serine and threonine residues present in the C-terminal region. Post-translationally, contains one covalently linked retinal chromophore.

The protein resides in the membrane. It is found in the cell projection. The protein localises to the cilium. It localises to the photoreceptor outer segment. Photoreceptor required for image-forming vision at low light intensity. While most salt water fish species use retinal as chromophore, most freshwater fish use 3-dehydroretinal, or a mixture of retinal and 3-dehydroretinal. Light-induced isomerization of 11-cis to all-trans retinal triggers a conformational change that activates signaling via G-proteins. Subsequent receptor phosphorylation mediates displacement of the bound G-protein alpha subunit by arrestin and terminates signaling. The chain is Rhodopsin (rho) from Lithognathus mormyrus (Striped seabream).